Consider the following 338-residue polypeptide: MIDFKAVIAKVATGASLTRDEAANAFDAMMSGDATPSQMGALLMGLRVRGETVDEITGAVTTMRAKMLTVAAPPDAVDVVGTGGDGSGSVNVSTCTSFVVAGCGVPVAKHGNRALSSKSGAADVLNALGVKIDITPDHVGRCVAEAGIGFMFAPTHHPAMKNVGPTRVELATRTIFNLLGPLSNPAGVKRQMIGVFSRQWVQPLAQVLQNLGSESIWVVHGSDGLDEITLSGPTAVAELKNGEIRTFEIGPEDAGLPRAPADALKGGDAEANAVALRAVLEGMPGPYRDVALLNAAATLIVAGKAKDLKEGVALGAQSIDSGAAEARLKKLIAVSAAA.

5-phospho-alpha-D-ribose 1-diphosphate contacts are provided by residues Gly81, 84–85 (GD), Ser89, 91–94 (NVST), 109–117 (KHGNRALSS), and Ala121. Gly81 is an anthranilate binding site. Mg(2+) is bound at residue Ser93. An anthranilate-binding site is contributed by Asn112. Arg167 lines the anthranilate pocket. Residues Asp226 and Glu227 each coordinate Mg(2+).

This sequence belongs to the anthranilate phosphoribosyltransferase family. As to quaternary structure, homodimer. The cofactor is Mg(2+).

The enzyme catalyses N-(5-phospho-beta-D-ribosyl)anthranilate + diphosphate = 5-phospho-alpha-D-ribose 1-diphosphate + anthranilate. It participates in amino-acid biosynthesis; L-tryptophan biosynthesis; L-tryptophan from chorismate: step 2/5. Catalyzes the transfer of the phosphoribosyl group of 5-phosphorylribose-1-pyrophosphate (PRPP) to anthranilate to yield N-(5'-phosphoribosyl)-anthranilate (PRA). The protein is Anthranilate phosphoribosyltransferase of Rhodopseudomonas palustris (strain HaA2).